The primary structure comprises 287 residues: MNTVKTVRELRAAVARARGEGKRIGFVPTMGNLHSGHAALVTKAAQRADFVVASIFVNPLQFGANEDLDKYPRTLAADQERLVQAGCNLLFAPTVEEMYPDGMSVQTRVSVPQLSEGLCGASRPGHFEGVATVVNKLFNMVQPDLAVFGEKDYQQLAVIRAMVRDLNMPIQIIGEPTVRAEDGLALSSRNGYLTPEQRTAAPALYRTLQHIAAGIGRGQRDFAALVAEGQAQLSAAGFRPDYLEVRHAVSLRPAVINDRDLVVIAAAYLGNTRLIDNLYLHLEEKTA.

Residue 30 to 37 (MGNLHSGH) participates in ATP binding. Histidine 37 serves as the catalytic Proton donor. Glutamine 61 is a binding site for (R)-pantoate. Residue glutamine 61 coordinates beta-alanine. ATP is bound at residue 149–152 (GEKD). Glutamine 155 serves as a coordination point for (R)-pantoate. Residues valine 178 and 186–189 (LSSR) contribute to the ATP site.

This sequence belongs to the pantothenate synthetase family. As to quaternary structure, homodimer.

It localises to the cytoplasm. The enzyme catalyses (R)-pantoate + beta-alanine + ATP = (R)-pantothenate + AMP + diphosphate + H(+). Its pathway is cofactor biosynthesis; (R)-pantothenate biosynthesis; (R)-pantothenate from (R)-pantoate and beta-alanine: step 1/1. Functionally, catalyzes the condensation of pantoate with beta-alanine in an ATP-dependent reaction via a pantoyl-adenylate intermediate. The chain is Pantothenate synthetase from Pseudomonas putida (strain ATCC 47054 / DSM 6125 / CFBP 8728 / NCIMB 11950 / KT2440).